The chain runs to 470 residues: AAA-ATPase At5g17730 (470 aa).

The signal sequence occupies residues 1–18 (MFSLRNLPSLAPFVSAYA). 252–259 (GPPGTGKT) contacts ATP.

This sequence belongs to the AAA ATPase family. BCS1 subfamily. Mg(2+) is required as a cofactor.

The enzyme catalyses ATP + H2O = ADP + phosphate + H(+). The protein is AAA-ATPase At5g17730 of Arabidopsis thaliana (Mouse-ear cress).